The following is a 248-amino-acid chain: 3-deoxy-manno-octulosonate cytidylyltransferase (248 aa).

The protein belongs to the KdsB family.

The protein resides in the cytoplasm. It carries out the reaction 3-deoxy-alpha-D-manno-oct-2-ulosonate + CTP = CMP-3-deoxy-beta-D-manno-octulosonate + diphosphate. Its pathway is nucleotide-sugar biosynthesis; CMP-3-deoxy-D-manno-octulosonate biosynthesis; CMP-3-deoxy-D-manno-octulosonate from 3-deoxy-D-manno-octulosonate and CTP: step 1/1. It functions in the pathway bacterial outer membrane biogenesis; lipopolysaccharide biosynthesis. Its function is as follows. Activates KDO (a required 8-carbon sugar) for incorporation into bacterial lipopolysaccharide in Gram-negative bacteria. The sequence is that of 3-deoxy-manno-octulosonate cytidylyltransferase from Syntrophus aciditrophicus (strain SB).